Consider the following 179-residue polypeptide: Translation initiation factor IF-3 (179 aa).

The protein belongs to the IF-3 family. As to quaternary structure, monomer.

It localises to the cytoplasm. Functionally, IF-3 binds to the 30S ribosomal subunit and shifts the equilibrium between 70S ribosomes and their 50S and 30S subunits in favor of the free subunits, thus enhancing the availability of 30S subunits on which protein synthesis initiation begins. This is Translation initiation factor IF-3 from Leptospira borgpetersenii serovar Hardjo-bovis (strain L550).